A 439-amino-acid chain; its full sequence is ATP-dependent protease ATPase subunit HslU (439 aa).

Residues I17, 59-64 (GVGKTE), D251, E317, and R389 contribute to the ATP site.

This sequence belongs to the ClpX chaperone family. HslU subfamily. A double ring-shaped homohexamer of HslV is capped on each side by a ring-shaped HslU homohexamer. The assembly of the HslU/HslV complex is dependent on binding of ATP.

Its subcellular location is the cytoplasm. In terms of biological role, ATPase subunit of a proteasome-like degradation complex; this subunit has chaperone activity. The binding of ATP and its subsequent hydrolysis by HslU are essential for unfolding of protein substrates subsequently hydrolyzed by HslV. HslU recognizes the N-terminal part of its protein substrates and unfolds these before they are guided to HslV for hydrolysis. The polypeptide is ATP-dependent protease ATPase subunit HslU (Campylobacter jejuni subsp. jejuni serotype O:23/36 (strain 81-176)).